Here is a 147-residue protein sequence, read N- to C-terminus: Small ribosomal subunit protein bS16m (147 aa).

The protein belongs to the bacterial ribosomal protein bS16 family. Component of the mitochondrial ribosome small subunit (28S) which comprises a 12S rRNA and about 30 distinct proteins.

The protein localises to the mitochondrion. The polypeptide is Small ribosomal subunit protein bS16m (mrps-16) (Caenorhabditis elegans).